The primary structure comprises 141 residues: ATP synthase epsilon chain (141 aa).

This sequence belongs to the ATPase epsilon chain family. In terms of assembly, F-type ATPases have 2 components, CF(1) - the catalytic core - and CF(0) - the membrane proton channel. CF(1) has five subunits: alpha(3), beta(3), gamma(1), delta(1), epsilon(1). CF(0) has three main subunits: a, b and c.

It is found in the cell inner membrane. In terms of biological role, produces ATP from ADP in the presence of a proton gradient across the membrane. This Thioalkalivibrio sulfidiphilus (strain HL-EbGR7) protein is ATP synthase epsilon chain.